The sequence spans 155 residues: Fibroblast growth factor 2 (155 aa).

The propeptide occupies Met1–Leu9. Residues Met1–Thr11 show a composition bias toward polar residues. The disordered stretch occupies residues Met1 to Gly24. Heparin is bound by residues Lys27–Arg31 and Arg116–Lys119.

Belongs to the heparin-binding growth factors family.

The protein resides in the secreted. It localises to the nucleus. Its function is as follows. Acts as a ligand for FGFR1, FGFR2, FGFR3 and FGFR4. Also acts as an integrin ligand which is required for FGF2 signaling. Plays an important role in the regulation of cell survival, cell division, cell differentiation and cell migration. Functions as a potent mitogen in vitro. Can induce angiogenesis. This is Fibroblast growth factor 2 (fgf2) from Xenopus laevis (African clawed frog).